The primary structure comprises 169 residues: Protein YABBY 7 (169 aa).

Residues 21-48 (CSFCATVLLVSVPCSSVLRVVAVQCGHC) form a C4-type zinc finger. The segment at 63–122 (SASIELTPQELDAGPPPGEYSDESSGDDREGRDAEDDAPAPAAAAVANKPPGRKQRTPSA) is disordered.

This sequence belongs to the YABBY family. In terms of tissue distribution, expressed in leaf sheaths and flowers.

It localises to the nucleus. The chain is Protein YABBY 7 (YAB7) from Oryza sativa subsp. japonica (Rice).